We begin with the raw amino-acid sequence, 21 residues long: uncharacterized protein (21 aa).

This is an uncharacterized protein from Haemophilus influenzae (strain ATCC 51907 / DSM 11121 / KW20 / Rd).